Consider the following 386-residue polypeptide: Putative membrane-bound transacylase BcsY (386 aa).

10 consecutive transmembrane segments (helical) span residues 37–57 (LAIA…FIGV), 91–111 (LLPA…WWVL), 118–138 (IALN…SGHV), 156–176 (LSLE…LPLT), 181–201 (LVLS…WHTG), 237–257 (AVYA…PLSY), 258–278 (ACPS…IMLP), 290–310 (LSPL…GIVV), 322–342 (AMMA…YVLV), and 362–382 (AALL…ISHV).

Belongs to the acyltransferase 3 family.

The protein resides in the cell inner membrane. The protein operates within glycan metabolism; bacterial cellulose biosynthesis. Functionally, may acylate a glucose moiety into cellulose fibrils, in cooperation with BcsABII and BcsCII. This Komagataeibacter xylinus (Gluconacetobacter xylinus) protein is Putative membrane-bound transacylase BcsY (bcsY).